A 463-amino-acid polypeptide reads, in one-letter code: Nuclear hormone receptor family member nhr-79 (463 aa).

The nuclear receptor DNA-binding region spans 3-81 (RGKCMVCDSP…AGMMRDLVQA (79 aa)). NR C4-type zinc fingers lie at residues 6 to 27 (CMVCDSPNATNYHFGAQSCKAC) and 43 to 64 (CLGDGVHSCKIDHTLRLNCRHC). A disordered region spans residues 83 to 119 (REIKSDKGKNSRNSSQSEDFFSPPPEQPGPSNYFDQF). The region spanning 203-463 (YTEQVINLNM…ILKDMLKFQY (261 aa)) is the NR LBD domain.

It belongs to the nuclear hormone receptor family.

The protein localises to the nucleus. Functionally, orphan nuclear receptor. The polypeptide is Nuclear hormone receptor family member nhr-79 (nhr-79) (Caenorhabditis elegans).